A 60-amino-acid chain; its full sequence is Large ribosomal subunit protein bL32 (60 aa).

This sequence belongs to the bacterial ribosomal protein bL32 family.

In Azotobacter vinelandii (strain DJ / ATCC BAA-1303), this protein is Large ribosomal subunit protein bL32.